Here is a 130-residue protein sequence, read N- to C-terminus: Small ribosomal subunit protein uS8 (130 aa).

Belongs to the universal ribosomal protein uS8 family. As to quaternary structure, part of the 30S ribosomal subunit. Contacts proteins S5 and S12.

In terms of biological role, one of the primary rRNA binding proteins, it binds directly to 16S rRNA central domain where it helps coordinate assembly of the platform of the 30S subunit. The sequence is that of Small ribosomal subunit protein uS8 from Aliivibrio salmonicida (strain LFI1238) (Vibrio salmonicida (strain LFI1238)).